Reading from the N-terminus, the 277-residue chain is Sulfur carrier protein FdhD (277 aa).

C121 acts as the Cysteine persulfide intermediate in catalysis. 260–265 (FCKPGR) lines the Mo-bis(molybdopterin guanine dinucleotide) pocket.

It belongs to the FdhD family.

The protein resides in the cytoplasm. Required for formate dehydrogenase (FDH) activity. Acts as a sulfur carrier protein that transfers sulfur from IscS to the molybdenum cofactor prior to its insertion into FDH. The sequence is that of Sulfur carrier protein FdhD from Escherichia coli O6:K15:H31 (strain 536 / UPEC).